We begin with the raw amino-acid sequence, 942 residues long: Leucine--tRNA ligase (942 aa).

Residues 41–51 carry the 'HIGH' region motif; sequence PYLNGVLHAGH. The short motif at 633-637 is the 'KMSKS' region element; that stretch reads KLSKS. Lys-636 contributes to the ATP binding site.

Belongs to the class-I aminoacyl-tRNA synthetase family.

It localises to the cytoplasm. It carries out the reaction tRNA(Leu) + L-leucine + ATP = L-leucyl-tRNA(Leu) + AMP + diphosphate. This chain is Leucine--tRNA ligase, found in Methanocaldococcus jannaschii (strain ATCC 43067 / DSM 2661 / JAL-1 / JCM 10045 / NBRC 100440) (Methanococcus jannaschii).